A 361-amino-acid polypeptide reads, in one-letter code: Peptide chain release factor 1 (361 aa).

The residue at position 235 (Gln235) is an N5-methylglutamine. The segment at 288–307 (AAEAQTRKLQVGSGDRSQRI) is disordered.

This sequence belongs to the prokaryotic/mitochondrial release factor family. Post-translationally, methylated by PrmC. Methylation increases the termination efficiency of RF1.

The protein localises to the cytoplasm. Peptide chain release factor 1 directs the termination of translation in response to the peptide chain termination codons UAG and UAA. This is Peptide chain release factor 1 from Xanthomonas axonopodis pv. citri (strain 306).